A 359-amino-acid polypeptide reads, in one-letter code: Probable cinnamyl alcohol dehydrogenase 8A (359 aa).

C45 is a Zn(2+) binding site. T47 contacts NADP(+). H67, E68, C98, C101, C104, C112, and C161 together coordinate Zn(2+). NADP(+) is bound by residues T165, 186–191 (GLGGLG), 209–214 (SSSPAK), T249, G273, and 296–298 (SGG).

Belongs to the zinc-containing alcohol dehydrogenase family. In terms of assembly, homodimer. Requires Zn(2+) as cofactor.

It carries out the reaction (E)-cinnamyl alcohol + NADP(+) = (E)-cinnamaldehyde + NADPH + H(+). The enzyme catalyses (E)-coniferol + NADP(+) = (E)-coniferaldehyde + NADPH + H(+). It catalyses the reaction (E)-sinapyl alcohol + NADP(+) = (E)-sinapaldehyde + NADPH + H(+). The catalysed reaction is (E)-4-coumaroyl alcohol + NADP(+) = (E)-4-coumaraldehyde + NADPH + H(+). It carries out the reaction (E)-caffeyl alcohol + NADP(+) = (E)-caffeyl aldehyde + NADPH + H(+). Its pathway is aromatic compound metabolism; phenylpropanoid biosynthesis. Involved in lignin biosynthesis. Catalyzes the final step specific for the production of lignin monomers. Catalyzes the NADPH-dependent reduction of coniferaldehyde, 5-hydroxyconiferaldehyde, sinapaldehyde, 4-coumaraldehyde and caffeyl aldehyde to their respective alcohols. The chain is Probable cinnamyl alcohol dehydrogenase 8A from Oryza sativa subsp. japonica (Rice).